The sequence spans 566 residues: MKISRQAYADMFGPTVGDKVRLADTELWIEVEKDFTTYGEEVKFGGGKVIRDGMGQGQLLAADVVDTLITNALIIDHWGIVKADVGIKNGRIAAIGKAGNPDIQPDVTIAVGAATEVIAGEGMILTAGGVDTHIHFICPQQIEEALMSGVTTMIGGGTGPATGTNATTVTPGPWHMARMLQASDSFPMNIGFTGKGNVSLPGPLIEQVKAGAIGLKLHEDWGTTPAAIDNCLSVADEYDVQVAIHTDTLNESGFVETTLAAFKNRTIHTYHTEGAGGGHAPDIIKACGSPNVLPSSTNPTRPFTRNTIDEHLDMLMVCHHLDPSIAEDVAFAESRIRRETIAAEDILHDLGAFSMLSSDSQAMGRVGEVIMRTWQTADKMKKQRGPLPQDGPGNDNFRAKRYIAKYTINPAITHGISHEVGSIEVGKWADLVLWRPAFFGVKPTLILKGGAIAASLMGDANASIPTPQPVHYRPMFASFGSSLHATSLTFISQAAFDAGVPETLGLKKQIGVVKGCRTVQKKDLIHNDYLPDIEVDPQTYQVKADGVLLWCEPADVLPMAQRYFLF.

The region spanning 128-566 (GGVDTHIHFI…LPMAQRYFLF (439 aa)) is the Urease domain. Residues H133, H135, and K216 each contribute to the Ni(2+) site. N6-carboxylysine is present on K216. H218 is a binding site for substrate. Residues H245 and H271 each coordinate Ni(2+). Catalysis depends on H319, which acts as the Proton donor. D359 is a Ni(2+) binding site.

It belongs to the metallo-dependent hydrolases superfamily. Urease alpha subunit family. In terms of assembly, may form a heterohexamer of 3 UreC (alpha) and 3 UreAB (gamma/beta) subunits. May also form a heterotrimer of UreA (gamma), UreB (beta) and UreC (alpha) subunits. Three heterotrimers associate to form the active enzyme. The cofactor is Ni cation. Carboxylation allows a single lysine to coordinate two nickel ions.

It localises to the cytoplasm. The enzyme catalyses urea + 2 H2O + H(+) = hydrogencarbonate + 2 NH4(+). It participates in nitrogen metabolism; urea degradation; CO(2) and NH(3) from urea (urease route): step 1/1. This chain is Urease subunit alpha, found in Pseudomonas syringae pv. tomato (strain ATCC BAA-871 / DC3000).